The chain runs to 451 residues: tRNA modification GTPase MnmE (451 aa).

(6S)-5-formyl-5,6,7,8-tetrahydrofolate contacts are provided by R37, E95, and K135. The 145-residue stretch at 232–376 (GLSIVIMGPP…LVEAIADFAG (145 aa)) folds into the TrmE-type G domain. Residue N242 participates in K(+) binding. Residues 242–247 (NAGKST), 261–267 (SEIAGTT), and 286–289 (DTAG) contribute to the GTP site. S246 lines the Mg(2+) pocket. The K(+) site is built by S261, I263, and T266. T267 contacts Mg(2+). K451 is a (6S)-5-formyl-5,6,7,8-tetrahydrofolate binding site.

It belongs to the TRAFAC class TrmE-Era-EngA-EngB-Septin-like GTPase superfamily. TrmE GTPase family. As to quaternary structure, homodimer. Heterotetramer of two MnmE and two MnmG subunits. It depends on K(+) as a cofactor.

The protein resides in the cytoplasm. Exhibits a very high intrinsic GTPase hydrolysis rate. Involved in the addition of a carboxymethylaminomethyl (cmnm) group at the wobble position (U34) of certain tRNAs, forming tRNA-cmnm(5)s(2)U34. The chain is tRNA modification GTPase MnmE from Beijerinckia indica subsp. indica (strain ATCC 9039 / DSM 1715 / NCIMB 8712).